Consider the following 319-residue polypeptide: Phosphatidylglycerol--prolipoprotein diacylglyceryl transferase (319 aa).

3 helical membrane passes run 21-41 (PIPI…AIWL), 50-70 (GGNP…GIIG), and 98-118 (NGGL…AVFF). R144 is an a 1,2-diacyl-sn-glycero-3-phospho-(1'-sn-glycerol) binding site. The next 2 membrane-spanning stretches (helical) occupy residues 191-211 (VHPT…LLMW) and 254-274 (INTI…FLLK). The interval 295–319 (AVASPDGKPLPKAGEGIDGETPSTR) is disordered.

The protein belongs to the Lgt family.

It is found in the cell membrane. The catalysed reaction is L-cysteinyl-[prolipoprotein] + a 1,2-diacyl-sn-glycero-3-phospho-(1'-sn-glycerol) = an S-1,2-diacyl-sn-glyceryl-L-cysteinyl-[prolipoprotein] + sn-glycerol 1-phosphate + H(+). It participates in protein modification; lipoprotein biosynthesis (diacylglyceryl transfer). Its function is as follows. Catalyzes the transfer of the diacylglyceryl group from phosphatidylglycerol to the sulfhydryl group of the N-terminal cysteine of a prolipoprotein, the first step in the formation of mature lipoproteins. The sequence is that of Phosphatidylglycerol--prolipoprotein diacylglyceryl transferase from Corynebacterium glutamicum (strain R).